A 334-amino-acid chain; its full sequence is HTH-type transcriptional repressor PurR (334 aa).

Residues 2-56 form the HTH lacI-type domain; that stretch reads ATIKDVARLAGVSTTTVSHVINKTRFVAEATQEKVMKAVDELNYAPSAVARSLKC. Positions 4–23 form a DNA-binding region, H-T-H motif; it reads IKDVARLAGVSTTTVSHVIN. A DNA-binding region spans residues 48–56; that stretch reads SAVARSLKC. Residues Phe-73, Lys-189, Phe-220, and Asp-274 each contribute to the hypoxanthine site.

As to quaternary structure, homodimer.

The protein operates within purine metabolism; purine nucleotide biosynthesis [regulation]. Is the main repressor of the genes involved in the de novo synthesis of purine nucleotides, regulating purB, purC, purEK, purF, purHD, purL, purMN and guaBA expression. PurR is allosterically activated to bind its cognate DNA by binding the purine corepressors, hypoxanthine or guanine, thereby effecting transcription repression. The polypeptide is HTH-type transcriptional repressor PurR (Vibrio parahaemolyticus serotype O3:K6 (strain RIMD 2210633)).